The following is a 271-amino-acid chain: Arginine and glutamate-rich protein 1 (271 aa).

Basic residues-rich tracts occupy residues Met1 to Ser29 and Val37 to Ser58. The tract at residues Met1 to Arg72 is necessary and sufficient for RNA binding. A disordered region spans residues Met1–Arg112. 2 positions are modified to phosphoserine: Ser58 and Ser60. Position 61 is a phosphothreonine (Thr61). 2 stretches are compositionally biased toward basic and acidic residues: residues Ser66–Ile82 and Ser91–Arg112. A necessary and sufficient for transcriptional regulation region spans residues Ala73–Asp271. Phosphoserine occurs at positions 74 and 75. An LXXLL motif 1; degenerate motif is present at residues Leu170–Leu174. Residues Leu199–Leu203 carry the LXXLL motif 2; degenerate motif. Over residues Met236–Lys251 the composition is skewed to basic and acidic residues. Residues Met236–Asp271 form a disordered region. Phosphoserine is present on Ser264.

It belongs to the ARGLU1 family. As to quaternary structure, interacts with MED1; the interaction is direct. Interacts with PUF60, U2AF2 and JMJD6; may interact with other proteins involved in RNA processing and splicing. In terms of tissue distribution, high expression levels in the neocortex, hippocampus and thalamus but low expression levels in the midbrain and hindbrain (at protein level). Ubiquitously expressed with highest expression levels in the central nervous system and low expression in uterus and pancreas.

It is found in the nucleus. The protein resides in the nucleus speckle. The protein localises to the chromosome. Dual function regulator of gene expression; regulator of transcription and modulator of alternative splicing. General coactivator of nuclear receptor-induced gene expression, including genes activated by the glucocorticoid receptor NR3C1. Binds to a subset of pre-mRNAs and to components of the spliceosome machinery to directly modulate basal alternative splicing; involved in simple and complex cassette exon splicing events. Binds its own pre-mRNA and regulates its alternative splicing and degradation; one of the alternatively spliced products is a stable intronic sequence RNA (sisRNA) that binds the protein to regulate its ability to affect splicing. Binding of the sisRNA stimulates phase separation and localization to nuclear speckles, which may contribute to activation of nuclear receptor-induced gene expression. May also indirectly modulate alternative splicing. Regulates transcription of genes involved in heart development, neuronal cell function, protein localization and chromatin localization. Regulates splicing of genes involved in neurogenesis and chromatin organization. Essential for central nervous system development. Required for the estrogen-dependent expression of ESR1 target genes. Can act in cooperation with MED1. This is Arginine and glutamate-rich protein 1 (Arglu1) from Mus musculus (Mouse).